The following is a 311-amino-acid chain: Pyrimidine-specific ribonucleoside hydrolase RihA (311 aa).

The active site involves H240.

Belongs to the IUNH family. RihA subfamily.

Hydrolyzes cytidine or uridine to ribose and cytosine or uracil, respectively. The chain is Pyrimidine-specific ribonucleoside hydrolase RihA from Klebsiella pneumoniae subsp. pneumoniae (strain ATCC 700721 / MGH 78578).